The primary structure comprises 72 residues: Small ribosomal subunit protein bS18 (72 aa).

It belongs to the bacterial ribosomal protein bS18 family. Part of the 30S ribosomal subunit. Forms a tight heterodimer with protein bS6.

Its function is as follows. Binds as a heterodimer with protein bS6 to the central domain of the 16S rRNA, where it helps stabilize the platform of the 30S subunit. The polypeptide is Small ribosomal subunit protein bS18 (Francisella philomiragia subsp. philomiragia (strain ATCC 25017 / CCUG 19701 / FSC 153 / O#319-036)).